Consider the following 486-residue polypeptide: Cardiolipin synthase A (486 aa).

2 consecutive transmembrane segments (helical) span residues 3 to 23 (TFYT…IAGV) and 38 to 58 (MAWL…YLSV). PLD phosphodiesterase domains are found at residues 219 to 246 (MDLR…VDPR) and 399 to 426 (EGGL…DMRS). Catalysis depends on residues His-224, Lys-226, Asp-231, His-404, Lys-406, and Asp-411.

It belongs to the phospholipase D family. Cardiolipin synthase subfamily. ClsA sub-subfamily.

Its subcellular location is the cell inner membrane. The catalysed reaction is 2 a 1,2-diacyl-sn-glycero-3-phospho-(1'-sn-glycerol) = a cardiolipin + glycerol. Its function is as follows. Catalyzes the reversible phosphatidyl group transfer from one phosphatidylglycerol molecule to another to form cardiolipin (CL) (diphosphatidylglycerol) and glycerol. The protein is Cardiolipin synthase A of Cronobacter sakazakii (strain ATCC BAA-894) (Enterobacter sakazakii).